We begin with the raw amino-acid sequence, 331 residues long: MKSSVPSLLIACLVMSLNSYTQQVLYCPPTPAPENVTEFVCNSPSLHEFPTGFPARAKMISVEFTQVSSLGVEALQGLPNLQELHLSNNRLKTLPSGLFRNLPQLHTLDLSTNHLEDLPPEIFTNASSLILLPLSENQLAELHPSWFQTLGELRILGLDHNQVKEIPISCFDKLKKLTSLDLSFNLLRRLAPEMFSGLDNLEKLILESNPIQCIVGRTFHWHPKLTVLSLKNSSLTNIMGFFQPLEQLELLDLSDNELTTMEPPVYKTSANLSLDLSGNPWACDCRLDNLLTWVNEHNIHLYSKEEIVCASPKHFKGECATSLHKSQICPC.

Residues 1–23 form the signal peptide; that stretch reads MKSSVPSLLIACLVMSLNSYTQQ. N-linked (GlcNAc...) asparagine glycosylation is present at N35. LRR repeat units lie at residues 78 to 101, 103 to 125, 127 to 149, 150 to 173, 175 to 197, 199 to 221, 223 to 244, and 245 to 268; these read LPNLQELHLSNNRLKTLPSGLFRN, PQLHTLDLSTNHLEDLPPEIFTN, SSLILLPLSENQLAELHPSWFQT, LGELRILGLDHNQVKEIPISCFDK, KKLTSLDLSFNLLRRLAPEMFSG, DNLEKLILESNPIQCIVGRTFHW, PKLTVLSLKNSSLTNIMGFFQP, and LEQLELLDLSDNELTTMEPPVYKT. An N-linked (GlcNAc...) asparagine glycan is attached at N125. N232 carries N-linked (GlcNAc...) asparagine glycosylation. N271 is a glycosylation site (N-linked (GlcNAc...) asparagine). One can recognise an LRRCT domain in the interval 279–330; that stretch reads NPWACDCRLDNLLTWVNEHNIHLYSKEEIVCASPKHFKGECATSLHKSQICP.

Homotrimer.

The protein resides in the secreted. In terms of biological role, inhibits the enzymatic activity of the basic phospholipase A2 (PLA2). The polypeptide is Phospholipase A2 inhibitor (Gloydius brevicaudus siniticus (Chinese mamushi)).